The sequence spans 197 residues: MSTTIDMPGSSKAAKAGKPVLVTTPSRPGGWKKGVAIMDFILRLGAIAAALGAAATMGLSDQTLPFFTQFFQFEASYDSFTTFQFFVITMALVAGYLVLSLPLSIVAVVRPHAAGPRLFLIILDTVFLTLATASGASAASIVYLAHNGNQDTNWIAICNQFGDFCAQTSGAVVSSLVAVLVFVLLIVMSALVLGKKH.

The Cytoplasmic portion of the chain corresponds to 1–34; it reads MSTTIDMPGSSKAAKAGKPVLVTTPSRPGGWKKG. The helical transmembrane segment at 35–55 threads the bilayer; that stretch reads VAIMDFILRLGAIAAALGAAA. Topologically, residues 56-84 are extracellular; sequence TMGLSDQTLPFFTQFFQFEASYDSFTTFQ. Residues 85–105 form a helical membrane-spanning segment; sequence FFVITMALVAGYLVLSLPLSI. Over 106–117 the chain is Cytoplasmic; the sequence is VAVVRPHAAGPR. The chain crosses the membrane as a helical span at residues 118–138; that stretch reads LFLIILDTVFLTLATASGASA. Over 139-171 the chain is Extracellular; that stretch reads ASIVYLAHNGNQDTNWIAICNQFGDFCAQTSGA. A helical membrane pass occupies residues 172-192; that stretch reads VVSSLVAVLVFVLLIVMSALV. The Cytoplasmic segment spans residues 193–197; sequence LGKKH.

It belongs to the Casparian strip membrane proteins (CASP) family. As to quaternary structure, homodimer and heterodimers.

The protein resides in the cell membrane. In terms of biological role, regulates membrane-cell wall junctions and localized cell wall deposition. Required for establishment of the Casparian strip membrane domain (CSD) and the subsequent formation of Casparian strips, a cell wall modification of the root endodermis that determines an apoplastic barrier between the intraorganismal apoplasm and the extraorganismal apoplasm and prevents lateral diffusion. This Lotus japonicus (Lotus corniculatus var. japonicus) protein is Casparian strip membrane protein 5.